Consider the following 547-residue polypeptide: Glucose-6-phosphate isomerase (547 aa).

Glu-354 (proton donor) is an active-site residue. Catalysis depends on residues His-385 and Lys-513.

It belongs to the GPI family.

The protein resides in the cytoplasm. It carries out the reaction alpha-D-glucose 6-phosphate = beta-D-fructose 6-phosphate. It participates in carbohydrate biosynthesis; gluconeogenesis. Its pathway is carbohydrate degradation; glycolysis; D-glyceraldehyde 3-phosphate and glycerone phosphate from D-glucose: step 2/4. Catalyzes the reversible isomerization of glucose-6-phosphate to fructose-6-phosphate. This chain is Glucose-6-phosphate isomerase, found in Endomicrobium trichonymphae.